The primary structure comprises 1872 residues: Fatty acid synthase beta subunit pkiC (1872 aa).

Positions 174–425 (VFGGQGECSR…DQSRIPFRDR (252 aa)) are acetyltransferase (AT) domain. The tract at residues 591–836 (NRVLGAPPIM…IIAATPGVSD (246 aa)) is enoyl reductase (ER) domain. The tract at residues 1111-1132 (TTPASWSTLSLTERDTSEETSD) is disordered. Residues 1158–1597 (PSHPLWMRAL…MPLEKLVVEI (440 aa)) form a dehydratase (DH) domain region. The MaoC-like domain maps to 1518–1617 (PPSNEPYAQL…CFSILAKRKE (100 aa)).

This sequence belongs to the fungal fatty acid synthetase subunit beta family. In terms of assembly, [Alpha(6)beta(6)] hexamers of two multifunctional subunits (alpha and beta).

It carries out the reaction acetyl-CoA + n malonyl-CoA + 2n NADPH + 4n H(+) = a long-chain-acyl-CoA + n CoA + n CO2 + 2n NADP(+).. It catalyses the reaction holo-[ACP] + acetyl-CoA = acetyl-[ACP] + CoA. The catalysed reaction is holo-[ACP] + malonyl-CoA = malonyl-[ACP] + CoA. The enzyme catalyses a (3R)-hydroxyacyl-[ACP] = a (2E)-enoyl-[ACP] + H2O. It carries out the reaction a 2,3-saturated acyl-[ACP] + NAD(+) = a (2E)-enoyl-[ACP] + NADH + H(+). It catalyses the reaction (9Z)-octadecenoyl-[ACP] + H2O = (9Z)-octadecenoate + holo-[ACP] + H(+). It functions in the pathway secondary metabolite biosynthesis. Fatty acid synthase beta subunit; part of the pki gene cluster that mediates the biosynthesis of 2,4-dihydroxy-3-methyl-6-(2-oxoundecyl)benzaldehyde. The first step in the pathway is the generation of the decanoyl starter unit by the FAS composed of subunits pkiB and pkiC, which is then transferred directly from the FAS to the SAT domain of the non-reducing polyketide synthase pkiA. PkiA condenses the decanoyyl starter unit with 4 malonyl-CoA units and performs one methylation step to yield 2,4-dihydroxy-3-methyl-6-(2-oxoundecyl)benzaldehyde. In Emericella nidulans (strain FGSC A4 / ATCC 38163 / CBS 112.46 / NRRL 194 / M139) (Aspergillus nidulans), this protein is Fatty acid synthase beta subunit pkiC.